A 356-amino-acid chain; its full sequence is C-X-C chemokine receptor type 2 (356 aa).

Residues 1–46 (MEYINWDNYSLEDLFGDIDNYTYNTEMPIIPADSAPCRPESLDINK) are Extracellular-facing. Asparagine 8 and asparagine 20 each carry an N-linked (GlcNAc...) asparagine glycan. A helical membrane pass occupies residues 47-73 (YAVVVIYVLVFVLNLLGNSLVIMVVLY). The Cytoplasmic segment spans residues 74-82 (SRVSHSVTD). The helical transmembrane segment at 83-103 (VYLLNLAIADLLFALTLPIWA) threads the bilayer. Over 104-118 (VSKVKGWIFGTPLCK) the chain is Extracellular. Cysteines 117 and 194 form a disulfide. Residues 119–140 (IVSLLKEVNFYSGILLLASISM) traverse the membrane as a helical segment. Residues 141 to 161 (DRYLAIVHATRRLTQKKHWVK) are Cytoplasmic-facing. Residues 162–181 (FICLGIWALSLILSLPIFVF) traverse the membrane as a helical segment. Residues 182 to 206 (RRAINPPYSSPVCYEDMGTNTTKLR) lie on the Extracellular side of the membrane. Residues 207 to 229 (IVMRALPQTFGFIVPLMIMLFCY) form a helical membrane-spanning segment. Topologically, residues 230–249 (GLTLRTLFEAHMGQKHRAMR) are cytoplasmic. A helical transmembrane segment spans residues 250-269 (VIFAVVLVFLLCWLPYNLVA). Residues 270 to 290 (DTLMRLQAIEETCQRRNDIGR) lie on the Extracellular side of the membrane. A helical membrane pass occupies residues 291 to 311 (ALDATEILGFFHSCLNPLIYA). Over 312–356 (FIGQKFRHGLLKIMAFHGLISKEYLPKDSRPSFVGSSSANTSTTF) the chain is Cytoplasmic.

Belongs to the G-protein coupled receptor 1 family. Interacts with IL8. Interacts with GNAI2. Post-translationally, phosphorylated upon ligand binding; which is required for desensitization.

It localises to the cell membrane. In terms of biological role, receptor for interleukin-8 which is a powerful neutrophil chemotactic factor. Binding of IL-8 to the receptor causes activation of neutrophils. This response is mediated via a G-protein that activates a phosphatidylinositol-calcium second messenger system. Binds to IL-8 with high affinity. Also binds with high affinity to CXCL3, GRO/MGSA and NAP-2. The sequence is that of C-X-C chemokine receptor type 2 (CXCR2) from Canis lupus familiaris (Dog).